Reading from the N-terminus, the 669-residue chain is DNA mismatch repair protein MutL (669 aa).

The tract at residues 356–382 is disordered; the sequence is FEQRQNTENNQEKTFSSEESNSKPFME. Over residues 361 to 378 the composition is skewed to polar residues; sequence NTENNQEKTFSSEESNSK.

This sequence belongs to the DNA mismatch repair MutL/HexB family.

This protein is involved in the repair of mismatches in DNA. It is required for dam-dependent methyl-directed DNA mismatch repair. May act as a 'molecular matchmaker', a protein that promotes the formation of a stable complex between two or more DNA-binding proteins in an ATP-dependent manner without itself being part of a final effector complex. This chain is DNA mismatch repair protein MutL, found in Staphylococcus aureus (strain USA300).